Consider the following 198-residue polypeptide: Recombination protein RecR (198 aa).

The C4-type zinc finger occupies 58–73; it reads CSVCGNFTDKDPCAIC. The Toprim domain occupies 81 to 175; sequence NTICVVEHPK…KVTRIAHGIP (95 aa).

The protein belongs to the RecR family.

May play a role in DNA repair. It seems to be involved in an RecBC-independent recombinational process of DNA repair. It may act with RecF and RecO. The polypeptide is Recombination protein RecR (Clostridium tetani (strain Massachusetts / E88)).